Reading from the N-terminus, the 916-residue chain is MLWARGRQPDHRIRMSQQTTIRKLAELVNTPVDKLLVQLAEAGMKFSGPDQVVTSTEKMKLLGFLRRTHGKADTPAEAASEAAKKITLNRRKLQEVTVNAGRTKTTVNVEVRQKRTYVKSENEGSGRAAPMTPDEERADILAKLAASRQRNLDEQQRLAESDRARDEAIQRKRDEEQAAKDRVEAERKAAEEAAAAASAPAPVAAAPAPSSAPAARAPSSPSSAPRPARPAGASPASRPATPARPDDRNNAAKHKTRGSHVMVAGVEDDDATKRFAGQLHLSAADRARRSNVRGKPTGRPGSSSSRRNDGGRGSNQSNSGPHGFERPTAPVVREVAIGETITVADLAQKLALKGGDVVKALFKMGVMATITQSIDHDTAALVTEELGHKAVRADNADFEDALLAHAEDAQGETTSRPPVVTIMGHVDHGKTSLLDYIRRTKIASGEAGGITQHIGAYHVETGRGVISFLDTPGHAAFTSMRARGAKITDIVVLVVAADDGVMPQTKEAVAHAKAAGVPLIVAVNKIDKAGADPLRVKNELLAENVVAEDFGGDTQFIEVSAKVGTGVDTLLDAISLQAEVLELKAVADGRASGTVIESSLDKGRGPVATVLVQQGALKRGDYLVCGIQYGRVRALFDETGHQPASAGPSIPVQVLGLSGVPEAGDDFVVVDDERLAKDVAQQRETKRRESRLVASATNRMEDILAQMGKGEGQQVLNLVIKADVQGSVEALKQSLVALSNDDIRINVIHSGVGGITESDANSAAASKATIIGFNVRADASARKIVESNGIDLRYFSIIYDVIDQVKQVASGLLGVEIREEIIGIAQVRDVFRSSKFGAVAGCMIIEGVVKRSKPIRVLRDSVVVFEGELESLRRFKENVDEVRNGTECGIGVKAYNDVKAGDQIECFERIEVARTL.

Residues 151 to 191 (NLDEQQRLAESDRARDEAIQRKRDEEQAAKDRVEAERKAAE) show a composition bias toward basic and acidic residues. 2 disordered regions span residues 151 to 262 (NLDE…SHVM) and 280 to 328 (HLSA…ERPT). 2 stretches are compositionally biased toward low complexity: residues 192 to 243 (EAAA…ATPA) and 293 to 305 (RGKP…SSSS). The tr-type G domain occupies 415–584 (SRPPVVTIMG…SLQAEVLELK (170 aa)). The segment at 424-431 (GHVDHGKT) is G1. 424-431 (GHVDHGKT) is a binding site for GTP. The G2 stretch occupies residues 449-453 (GITQH). Residues 470 to 473 (DTPG) are G3. Residues 470-474 (DTPGH) and 524-527 (NKID) contribute to the GTP site. Residues 524–527 (NKID) are G4. Residues 560-562 (SAK) are G5.

The protein belongs to the TRAFAC class translation factor GTPase superfamily. Classic translation factor GTPase family. IF-2 subfamily.

It is found in the cytoplasm. In terms of biological role, one of the essential components for the initiation of protein synthesis. Protects formylmethionyl-tRNA from spontaneous hydrolysis and promotes its binding to the 30S ribosomal subunits. Also involved in the hydrolysis of GTP during the formation of the 70S ribosomal complex. This is Translation initiation factor IF-2 from Xanthomonas campestris pv. campestris (strain ATCC 33913 / DSM 3586 / NCPPB 528 / LMG 568 / P 25).